Consider the following 366-residue polypeptide: RNA 3'-terminal phosphate cyclase (366 aa).

The ATP site is built by glutamine 104, proline 131, tyrosine 294, aspartate 297, glutamine 298, and histidine 320. Histidine 320 functions as the Tele-AMP-histidine intermediate in the catalytic mechanism.

Belongs to the RNA 3'-terminal cyclase family. Type 1 subfamily. As to expression, detected in retinal ganglion cells (RGCs) (at protein level).

It localises to the nucleus. It is found in the nucleoplasm. It carries out the reaction a 3'-end 3'-phospho-ribonucleotide-RNA + ATP = a 3'-end 2',3'-cyclophospho-ribonucleotide-RNA + AMP + diphosphate. Its function is as follows. Catalyzes the conversion of 3'-phosphate to a 2',3'-cyclic phosphodiester at the end of RNA. The mechanism of action of the enzyme occurs in 3 steps: (A) adenylation of the enzyme by ATP; (B) transfer of adenylate to an RNA-N3'P to produce RNA-N3'PP5'A; (C) and attack of the adjacent 2'-hydroxyl on the 3'-phosphorus in the diester linkage to produce the cyclic end product. Likely functions in some aspects of cellular RNA processing. Function plays an important role in regulating axon regeneration by inhibiting central nervous system (CNS) axon regeneration following optic nerve injury. This chain is RNA 3'-terminal phosphate cyclase, found in Mus musculus (Mouse).